Reading from the N-terminus, the 250-residue chain is DNA repair protein RecO (250 aa).

This sequence belongs to the RecO family.

In terms of biological role, involved in DNA repair and RecF pathway recombination. This chain is DNA repair protein RecO, found in Staphylococcus aureus (strain MW2).